A 437-amino-acid chain; its full sequence is Enolase (437 aa).

Q162 serves as a coordination point for (2R)-2-phosphoglycerate. The active-site Proton donor is the E204. D251, E297, and D324 together coordinate Mg(2+). Positions 349, 378, 379, and 400 each coordinate (2R)-2-phosphoglycerate. Catalysis depends on K349, which acts as the Proton acceptor.

Belongs to the enolase family. Requires Mg(2+) as cofactor.

Its subcellular location is the cytoplasm. It is found in the secreted. The protein resides in the cell surface. The catalysed reaction is (2R)-2-phosphoglycerate = phosphoenolpyruvate + H2O. It participates in carbohydrate degradation; glycolysis; pyruvate from D-glyceraldehyde 3-phosphate: step 4/5. Functionally, catalyzes the reversible conversion of 2-phosphoglycerate (2-PG) into phosphoenolpyruvate (PEP). It is essential for the degradation of carbohydrates via glycolysis. In Chlorobium limicola (strain DSM 245 / NBRC 103803 / 6330), this protein is Enolase.